The sequence spans 372 residues: Chaperone protein DnaJ (372 aa).

The J domain occupies 5–69 (DYYEVLGVSK…DKRKQYDQFG (65 aa)). A CR-type zinc finger spans residues 139–221 (GVDKIIELDL…CKGKGKYLER (83 aa)). Cysteine 152, cysteine 155, cysteine 169, cysteine 172, cysteine 195, cysteine 198, cysteine 209, and cysteine 212 together coordinate Zn(2+). 4 CXXCXGXG motif repeats span residues 152–159 (CSVCFGSG), 169–176 (CNNCHGTG), 195–202 (CNVCNGAG), and 209–216 (CKNCKGKG).

This sequence belongs to the DnaJ family. Homodimer. The cofactor is Zn(2+).

It localises to the cytoplasm. Participates actively in the response to hyperosmotic and heat shock by preventing the aggregation of stress-denatured proteins and by disaggregating proteins, also in an autonomous, DnaK-independent fashion. Unfolded proteins bind initially to DnaJ; upon interaction with the DnaJ-bound protein, DnaK hydrolyzes its bound ATP, resulting in the formation of a stable complex. GrpE releases ADP from DnaK; ATP binding to DnaK triggers the release of the substrate protein, thus completing the reaction cycle. Several rounds of ATP-dependent interactions between DnaJ, DnaK and GrpE are required for fully efficient folding. Also involved, together with DnaK and GrpE, in the DNA replication of plasmids through activation of initiation proteins. The sequence is that of Chaperone protein DnaJ from Mycoplasma mycoides subsp. mycoides SC (strain CCUG 32753 / NCTC 10114 / PG1).